The chain runs to 287 residues: Putative esterase/lipase HI_0193 (287 aa).

An AB hydrolase-1 domain is found at 47-273 (PVLIFIHGLF…SGHWVHAEKP (227 aa)). Catalysis depends on residues Ser-119 and His-266.

It belongs to the DmpD/TodF/XylF esterase family.

This Haemophilus influenzae (strain ATCC 51907 / DSM 11121 / KW20 / Rd) protein is Putative esterase/lipase HI_0193.